Here is a 622-residue protein sequence, read N- to C-terminus: Chaperone protein DnaK (622 aa).

Residue Thr-197 is modified to Phosphothreonine; by autocatalysis. Basic and acidic residues-rich tracts occupy residues 515–528 (LHKE…EAVE) and 575–614 (ASKE…KKDD). Disordered stretches follow at residues 515-537 (LHKE…DSLV) and 575-622 (ASKE…AEVE).

It belongs to the heat shock protein 70 family.

In terms of biological role, acts as a chaperone. The chain is Chaperone protein DnaK from Campylobacter lari (strain RM2100 / D67 / ATCC BAA-1060).